Here is a 321-residue protein sequence, read N- to C-terminus: Ferredoxin--NADP reductase (321 aa).

Positions 28, 36, 41, 81, 115, 274, and 315 each coordinate FAD.

The protein belongs to the ferredoxin--NADP reductase type 2 family. Homodimer. Requires FAD as cofactor.

It catalyses the reaction 2 reduced [2Fe-2S]-[ferredoxin] + NADP(+) + H(+) = 2 oxidized [2Fe-2S]-[ferredoxin] + NADPH. The protein is Ferredoxin--NADP reductase of Frankia alni (strain DSM 45986 / CECT 9034 / ACN14a).